A 45-amino-acid chain; its full sequence is Pyruvate dehydrogenase E1 component (45 aa).

Homodimer. It depends on thiamine diphosphate as a cofactor.

It catalyses the reaction N(6)-[(R)-lipoyl]-L-lysyl-[protein] + pyruvate + H(+) = N(6)-[(R)-S(8)-acetyldihydrolipoyl]-L-lysyl-[protein] + CO2. Functionally, the pyruvate dehydrogenase complex catalyzes the overall conversion of pyruvate to acetyl-CoA and CO(2). It contains multiple copies of three enzymatic components: pyruvate dehydrogenase (E1), dihydrolipoamide acetyltransferase (E2) and lipoamide dehydrogenase (E3). The chain is Pyruvate dehydrogenase E1 component from Azotobacter vinelandii.